A 294-amino-acid polypeptide reads, in one-letter code: Undecaprenyl-diphosphatase (294 aa).

Transmembrane regions (helical) follow at residues 2–22, 27–47, 65–85, 110–130, 135–155, 172–192, 215–235, 239–259, and 272–292; these read SMIY…SLIL, LVFS…PISS, VIAF…KIFW, LCIR…MIFY, LIFE…FLLV, ITYL…WPGF, FSFF…LYHY, IGLM…FIAL, and VSLI…YWGL.

The protein belongs to the UppP family.

It localises to the cell inner membrane. It carries out the reaction di-trans,octa-cis-undecaprenyl diphosphate + H2O = di-trans,octa-cis-undecaprenyl phosphate + phosphate + H(+). Its function is as follows. Catalyzes the dephosphorylation of undecaprenyl diphosphate (UPP). Confers resistance to bacitracin. The sequence is that of Undecaprenyl-diphosphatase from Blochmanniella pennsylvanica (strain BPEN).